A 363-amino-acid polypeptide reads, in one-letter code: Ribonuclease P protein subunit p40 (363 aa).

As to quaternary structure, component of nuclear RNase P and RNase MRP ribonucleoproteins. RNase P consists of a catalytic RNA moiety and about 10 protein subunits; POP1, POP4, POP5, POP7, RPP14, RPP21, RPP25, RPP30, RPP38 and RPP40. Within the RNase P complex, POP1, POP7 and RPP25 form the 'finger' subcomplex, POP5, RPP14, RPP40 and homodimeric RPP30 form the 'palm' subcomplex, and RPP21, POP4 and RPP38 form the 'wrist' subcomplex. All subunits of the RNase P complex interact with the catalytic RNA. Several subunits of RNase P are also part of the RNase MRP complex. RNase MRP consists of a catalytic RNA moiety and about 8 protein subunits; POP1, POP7, RPP25, RPP30, RPP38, RPP40 and possibly also POP4 and POP5.

Its subcellular location is the nucleus. It localises to the nucleolus. In terms of biological role, component of ribonuclease P, a ribonucleoprotein complex that generates mature tRNA molecules by cleaving their 5'-ends. Also a component of the MRP ribonuclease complex, which cleaves pre-rRNA sequences. This Rattus norvegicus (Rat) protein is Ribonuclease P protein subunit p40 (Rpp40).